We begin with the raw amino-acid sequence, 395 residues long: ATP phosphoribosyltransferase regulatory subunit (395 aa).

It belongs to the class-II aminoacyl-tRNA synthetase family. HisZ subfamily. As to quaternary structure, heteromultimer composed of HisG and HisZ subunits.

It is found in the cytoplasm. Its pathway is amino-acid biosynthesis; L-histidine biosynthesis; L-histidine from 5-phospho-alpha-D-ribose 1-diphosphate: step 1/9. Functionally, required for the first step of histidine biosynthesis. May allow the feedback regulation of ATP phosphoribosyltransferase activity by histidine. The polypeptide is ATP phosphoribosyltransferase regulatory subunit (Pseudomonas entomophila (strain L48)).